The chain runs to 1390 residues: Hepatocyte growth factor receptor (1390 aa).

The signal sequence occupies residues 1-24 (MKAPAVLAPGILVLLFTLVQRSNG). Residues 25–932 (ECKEALAKSE…VIVQPDQNFT (908 aa)) are Extracellular-facing. A Sema domain is found at 27–515 (KEALAKSEMN…TGKKITKIPL (489 aa)). N-linked (GlcNAc...) asparagine glycosylation is present at Asn-45. 4 disulfide bridges follow: Cys-95-Cys-101, Cys-98-Cys-160, Cys-133-Cys-141, and Cys-172-Cys-175. Asn-106 carries N-linked (GlcNAc...) asparagine glycosylation. N-linked (GlcNAc...) asparagine glycosylation occurs at Asn-149. N-linked (GlcNAc...) asparagine glycosylation is present at Asn-202. 2 cysteine pairs are disulfide-bonded: Cys-298-Cys-363 and Cys-385-Cys-397. 2 N-linked (GlcNAc...) asparagine glycosylation sites follow: Asn-399 and Asn-405. 4 disulfide bridges follow: Cys-520-Cys-538, Cys-526-Cys-561, Cys-529-Cys-545, and Cys-541-Cys-551. 3 IPT/TIG domains span residues 563-655 (PAIY…FSYV), 657-739 (PVIT…FSYR), and 742-836 (PIVY…LIYV). Thr-582 carries an O-linked (Man) threonine glycan. Asn-607 carries N-linked (GlcNAc...) asparagine glycosylation. A disulfide bridge links Cys-610 with Cys-624. Asn-635 is a glycosylation site (N-linked (GlcNAc...) asparagine). O-linked (Man) threonine glycosylation occurs at Thr-676. Residues Cys-697 and Cys-709 are joined by a disulfide bond. O-linked (Man) threonine glycosylation is present at Thr-761. N-linked (GlcNAc...) asparagine glycans are attached at residues Asn-785, Asn-879, and Asn-930. A helical membrane pass occupies residues 933–955 (GLIAGVVSISTALLLLLGFFLWL). The Cytoplasmic segment spans residues 956–1390 (KKRKQIKDLG…TRPASFWETS (435 aa)). Position 966 is a phosphoserine (Ser-966). Thr-977 carries the phosphothreonine modification. Residues Ser-990, Ser-997, and Ser-1000 each carry the phosphoserine modification. Tyr-1003 is modified (phosphotyrosine). In terms of domain architecture, Protein kinase spans 1078–1345 (VHFNEVIGRG…RISAIFSTFI (268 aa)). ATP contacts are provided by residues 1084–1092 (IGRGHFGCV) and Lys-1110. Asp-1204 serves as the catalytic Proton acceptor. The tract at residues 1212–1390 (LDEKFTVKVA…TRPASFWETS (179 aa)) is interaction with RANBP9. The residue at position 1230 (Tyr-1230) is a Phosphotyrosine. Residues Tyr-1234 and Tyr-1235 each carry the phosphotyrosine; by autocatalysis modification. Phosphothreonine is present on Thr-1289. The interaction with MUC20 stretch occupies residues 1320 to 1359 (WHPKAEMRPSFSELVSRISAIFSTFIGEHYVHVNATYVNV). A phosphotyrosine; by autocatalysis mark is found at Tyr-1349 and Tyr-1356. Tyr-1365 bears the Phosphotyrosine mark.

The protein belongs to the protein kinase superfamily. Tyr protein kinase family. Heterodimer made of an alpha chain (50 kDa) and a beta chain (145 kDa) which are disulfide linked. Binds PLXNB1. Interacts when phosphorylated with downstream effectors including STAT3, PIK3R1, SRC, PCLG1, GRB2 and GAB1. Interacts with SPSB1, SPSB2 and SPSB4. Interacts with INPP5D/SHIP1. When phosphorylated at Tyr-1356, interacts with INPPL1/SHIP2. Interacts with RANBP9 and RANBP10, as well as SPSB1, SPSB2, SPSB3 and SPSB4. SPSB1 binding occurs in the presence and in the absence of HGF, however HGF treatment has a positive effect on this interaction. Interacts with MUC20; prevents interaction with GRB2 and suppresses hepatocyte growth factor-induced cell proliferation. Interacts with GRB10. Interacts with PTPN1 and PTPN2. Interacts with LECT2; this interaction may have an antagonistic effect on receptor activation. Interacts with HSP90AA1 and HSP90AB1; the interaction suppresses MET kinase activity. Interacts with tensin TNS3. Interacts (when phosphorylated) with tensin TNS4 (via SH2 domain); the interaction increases MET protein stability by inhibiting MET endocytosis and subsequent lysosomal degradation. As to quaternary structure, (Microbial infection) Interacts via extracytoplasmic residues 25-656 with L.monocytogenes InlB; MET can bind HGF, its endogenous ligand, and InlB simultaneously. InlB probably dimerizes upon binding to MET, which encourages subsequent dimerization of MET. Autophosphorylated in response to ligand binding on Tyr-1234 and Tyr-1235 in the kinase domain leading to further phosphorylation of Tyr-1349 and Tyr-1356 in the C-terminal multifunctional docking site. Dephosphorylated by PTPRJ at Tyr-1349 and Tyr-1365. Dephosphorylated by PTPN1 and PTPN2. In terms of processing, ubiquitinated. Ubiquitination by CBL regulates MET endocytosis, resulting in decreasing plasma membrane receptor abundance, and in endosomal degradation and/or recycling of internalized receptors. Post-translationally, O-mannosylation of IPT/TIG domains by TMEM260 is required for protein maturation. O-mannosylated residues are composed of single mannose glycans that are not elongated or modified. (Microbial infection) Tyrosine phosphorylation is stimulated by L.monocytogenes InlB. Tyrosine phosphorylation is maximal 10-20 minutes after treatment with InlB and disappears by 60 minutes. The phosphorylated residues were not identified. In terms of tissue distribution, expressed in normal hepatocytes as well as in epithelial cells lining the stomach, the small and the large intestine. Found also in basal keratinocytes of esophagus and skin. High levels are found in liver, gastrointestinal tract, thyroid and kidney. Also present in the brain. Expressed in metaphyseal bone (at protein level).

It localises to the membrane. It is found in the secreted. The enzyme catalyses L-tyrosyl-[protein] + ATP = O-phospho-L-tyrosyl-[protein] + ADP + H(+). Its activity is regulated as follows. In its inactive state, the C-terminal tail interacts with the catalytic domain and inhibits the kinase activity. Upon ligand binding, the C-terminal tail is displaced and becomes phosphorylated, thus increasing the kinase activity. In terms of biological role, receptor tyrosine kinase that transduces signals from the extracellular matrix into the cytoplasm by binding to hepatocyte growth factor/HGF ligand. Regulates many physiological processes including proliferation, scattering, morphogenesis and survival. Ligand binding at the cell surface induces autophosphorylation of MET on its intracellular domain that provides docking sites for downstream signaling molecules. Following activation by ligand, interacts with the PI3-kinase subunit PIK3R1, PLCG1, SRC, GRB2, STAT3 or the adapter GAB1. Recruitment of these downstream effectors by MET leads to the activation of several signaling cascades including the RAS-ERK, PI3 kinase-AKT, or PLCgamma-PKC. The RAS-ERK activation is associated with the morphogenetic effects while PI3K/AKT coordinates prosurvival effects. During embryonic development, MET signaling plays a role in gastrulation, development and migration of neuronal precursors, angiogenesis and kidney formation. During skeletal muscle development, it is crucial for the migration of muscle progenitor cells and for the proliferation of secondary myoblasts. In adults, participates in wound healing as well as organ regeneration and tissue remodeling. Also promotes differentiation and proliferation of hematopoietic cells. May regulate cortical bone osteogenesis. Its function is as follows. (Microbial infection) Acts as a receptor for Listeria monocytogenes internalin InlB, mediating entry of the pathogen into cells. The polypeptide is Hepatocyte growth factor receptor (MET) (Homo sapiens (Human)).